The chain runs to 162 residues: Transcription elongation factor GreA (162 aa).

Residues Gln9–Glu38 adopt a coiled-coil conformation.

The protein belongs to the GreA/GreB family.

In terms of biological role, necessary for efficient RNA polymerase transcription elongation past template-encoded arresting sites. The arresting sites in DNA have the property of trapping a certain fraction of elongating RNA polymerases that pass through, resulting in locked ternary complexes. Cleavage of the nascent transcript by cleavage factors such as GreA or GreB allows the resumption of elongation from the new 3'terminus. GreA releases sequences of 2 to 3 nucleotides. This is Transcription elongation factor GreA from Desulfovibrio desulfuricans (strain ATCC 27774 / DSM 6949 / MB).